Reading from the N-terminus, the 309-residue chain is Glycine-rich RNA-binding protein 3, mitochondrial (309 aa).

Residues 1–37 (MAFLSKFGNILKQTTNKQLNAQVSLSSPSLFQAIRCM) constitute a mitochondrion transit peptide. In terms of domain architecture, RRM spans 40 to 118 (SKLFIGGMAY…RVVKVNYAND (79 aa)). The disordered stretch occupies residues 247–309 (FAGDSQFGGS…GEFEDVAKRA (63 aa)). Residues 258-273 (VGNSSQFGGDNTQFTA) are compositionally biased toward polar residues.

Belongs to the GR-RBP family. As to quaternary structure, homodimer. Interacts with ORRM2 and MORF8/RIP1. Interacts with RBG5/ORRM4. Binds to RBG2/ORRM5.

It is found in the mitochondrion. In terms of biological role, possibly has a role in RNA transcription or processing during stress. Involved in C-to-U editing of mitochondrial RNA. Functions as a minor mitochondrial editing factor. Controls 6 percent of the mitochondrial editing sites. This is Glycine-rich RNA-binding protein 3, mitochondrial from Arabidopsis thaliana (Mouse-ear cress).